Consider the following 427-residue polypeptide: 3-phosphoshikimate 1-carboxyvinyltransferase (427 aa).

3-phosphoshikimate is bound by residues K22, S23, and R27. K22 is a binding site for phosphoenolpyruvate. Phosphoenolpyruvate contacts are provided by G96 and R124. 3-phosphoshikimate-binding residues include S169, S170, Q171, S197, D313, N336, and K340. Q171 serves as a coordination point for phosphoenolpyruvate. D313 acts as the Proton acceptor in catalysis. 3 residues coordinate phosphoenolpyruvate: R344, R386, and K411.

It belongs to the EPSP synthase family. Monomer.

It is found in the cytoplasm. The catalysed reaction is 3-phosphoshikimate + phosphoenolpyruvate = 5-O-(1-carboxyvinyl)-3-phosphoshikimate + phosphate. It functions in the pathway metabolic intermediate biosynthesis; chorismate biosynthesis; chorismate from D-erythrose 4-phosphate and phosphoenolpyruvate: step 6/7. Functionally, catalyzes the transfer of the enolpyruvyl moiety of phosphoenolpyruvate (PEP) to the 5-hydroxyl of shikimate-3-phosphate (S3P) to produce enolpyruvyl shikimate-3-phosphate and inorganic phosphate. In Salmonella newport (strain SL254), this protein is 3-phosphoshikimate 1-carboxyvinyltransferase.